The primary structure comprises 107 residues: U-scoloptoxin(19)-Sm1a (107 aa).

A signal peptide spans 1 to 20; it reads MRFLVSVAFLLTVSSLLVSG.

It belongs to the scoloptoxin-19 family. Post-translationally, contains 6 disulfide bonds. As to expression, expressed by the venom gland.

The protein localises to the secreted. The sequence is that of U-scoloptoxin(19)-Sm1a from Scolopendra morsitans (Tanzanian blue ringleg centipede).